The following is a 162-amino-acid chain: NADH-quinone oxidoreductase subunit I (162 aa).

4Fe-4S ferredoxin-type domains follow at residues 52–82 and 93–122; these read LRRY…IEAG and TRYD…EGPN. Residues cysteine 62, cysteine 65, cysteine 68, cysteine 72, cysteine 102, cysteine 105, cysteine 108, and cysteine 112 each contribute to the [4Fe-4S] cluster site.

It belongs to the complex I 23 kDa subunit family. NDH-1 is composed of 14 different subunits. Subunits NuoA, H, J, K, L, M, N constitute the membrane sector of the complex. The cofactor is [4Fe-4S] cluster.

It is found in the cell inner membrane. The catalysed reaction is a quinone + NADH + 5 H(+)(in) = a quinol + NAD(+) + 4 H(+)(out). Its function is as follows. NDH-1 shuttles electrons from NADH, via FMN and iron-sulfur (Fe-S) centers, to quinones in the respiratory chain. The immediate electron acceptor for the enzyme in this species is believed to be ubiquinone. Couples the redox reaction to proton translocation (for every two electrons transferred, four hydrogen ions are translocated across the cytoplasmic membrane), and thus conserves the redox energy in a proton gradient. This is NADH-quinone oxidoreductase subunit I from Methylobacterium sp. (strain 4-46).